The primary structure comprises 456 residues: Ribonuclease inhibitor (456 aa).

Methionine 1 bears the N-acetylmethionine mark. LRR repeat units follow at residues 15-43 (WTEL…CKDI), 44-71 (SSAV…VGLV), 72-100 (LQGL…CGIL), 101-128 (PGML…LKLL), 129-157 (CEGL…CEPL), 158-185 (ASVL…VRIL), 186-214 (CQGL…CKDL), 215-242 (CDVV…IAAL), 243-271 (CPGL…CKDL), 272-299 (CRVL…ARLL), 300-328 (CESL…CPYF), 329-356 (CSVL…VQEL), 357-385 (CKAL…CSSL), 386-413 (ANVL…VLQL), and 414-442 (LESL…EEQL). Serine 86 is modified (phosphoserine).

In terms of assembly, forms high-affinity heterodimers with RNASE1, ANG and RNASE2.

Its subcellular location is the cytoplasm. The protein localises to the nucleus. Its function is as follows. Ribonuclease inhibitor which inhibits RNASE1, RNASE2 and angiogenin (ANG). May play a role in redox homeostasis. Required to inhibit the cytotoxic tRNA ribonuclease activity of ANG in the cytoplasm in absence of stress. Relocates to the nucleus in response to stress, relieving inhibition of ANG in the cytoplasm, and inhibiting the angiogenic activity of ANG in the nucleus. This chain is Ribonuclease inhibitor (Rnh1), found in Mus musculus (Mouse).